Consider the following 152-residue polypeptide: Nucleoside diphosphate kinase A (152 aa).

Lys12, Phe60, Arg88, and Thr94 together coordinate ATP. A Glycyl lysine isopeptide (Lys-Gly) (interchain with G-Cter in ubiquitin) cross-link involves residue Lys100. Residues Arg105 and Asn115 each coordinate ATP. The active-site Pros-phosphohistidine intermediate is His118. Ser120, Ser122, and Ser125 each carry phosphoserine.

This sequence belongs to the NDK family. In terms of assembly, hexamer of two different chains: An and B (A6, A5B, A4B2, A3B3, A2B4, AB5, B6). Interacts with PRUNE1. Component of the SET complex, composed of at least ANP32A, APEX1, HMGB2, NME1, SET and TREX1. Within this complex, interacts directly with SET. Also interacts with TREX1, but only following translocation to the nucleus. It depends on Mg(2+) as a cofactor.

It localises to the cytoplasm. The protein localises to the nucleus. The enzyme catalyses a 2'-deoxyribonucleoside 5'-diphosphate + ATP = a 2'-deoxyribonucleoside 5'-triphosphate + ADP. It carries out the reaction a ribonucleoside 5'-diphosphate + ATP = a ribonucleoside 5'-triphosphate + ADP. With respect to regulation, autophosphorylation at His-118 increases serine/threonine protein kinase activity of the enzyme. Interaction with the SET complex inhibits exonuclease activity. In terms of biological role, major role in the synthesis of nucleoside triphosphates other than ATP. The ATP gamma phosphate is transferred to the NDP beta phosphate via a ping-pong mechanism, using a phosphorylated active-site intermediate. Possesses nucleoside-diphosphate kinase, serine/threonine-specific protein kinase, geranyl and farnesyl pyrophosphate kinase, histidine protein kinase and 3'-5' exonuclease activities. Involved in cell proliferation, differentiation and development, signal transduction, G protein-coupled receptor endocytosis, and gene expression. Required for neural development including neural patterning and cell fate determination. During GZMA-mediated cell death, works in concert with TREX1. NME1 nicks one strand of DNA and TREX1 removes bases from the free 3' end to enhance DNA damage and prevent DNA end reannealing and rapid repair. The polypeptide is Nucleoside diphosphate kinase A (Nme1) (Rattus norvegicus (Rat)).